The chain runs to 327 residues: Fructose import binding protein FruE (327 aa).

The signal sequence occupies residues 1-22; that stretch reads MKNWKKAIALVASAAALVSVAA. Cys23 carries N-palmitoyl cysteine lipidation. A lipid anchor (S-diacylglycerol cysteine) is attached at Cys23.

This sequence belongs to the bacterial solute-binding protein 2 family. In terms of assembly, the complex is composed of an ATP-binding protein (FruK), two transmembrane proteins (FruF and FruG) and a solute-binding protein (FruE).

It localises to the cell membrane. In terms of biological role, part of the high-affinity ABC transporter complex FruEKFG involved in fructose uptake. Can also transport ribose and xylose, with lower affinity. Binds fructose, ribose and xylose, with fructose as the preferred substrate. The chain is Fructose import binding protein FruE from Bifidobacterium longum (strain NCC 2705).